Consider the following 694-residue polypeptide: E3 ubiquitin-protein ligase SPL11 (694 aa).

The span at 1 to 12 (MAGDRAEEEEGE) shows a compositional bias: acidic residues. 2 disordered regions span residues 1–21 (MAGD…ARAA) and 343–363 (NGME…ACSS). Residues 272–346 (TIPDEFRCPI…SQWCETNGME (75 aa)) form the U-box domain. Over residues 350–363 (RSTQPNKPTPACSS) the composition is skewed to polar residues. ARM repeat units lie at residues 398-438 (NANN…NLSI), 439-479 (HEDN…SLSV), 480-520 (IDEY…NLCI), 521-561 (YQGN…ILSS), 562-602 (HPEG…HLCS), and 603-650 (GEHH…FLVQ). The span at 650–667 (QQQEEQESQSQASAQVPP) shows a compositional bias: low complexity. The disordered stretch occupies residues 650-694 (QQQEEQESQSQASAQVPPQATPEQVPENDIPEQLDSPASQYPMVV).

In terms of assembly, interacts with SPIN1 (via N-terminus). In terms of tissue distribution, highly expressed in leaf, at intermediate levels in shoot and weakly in root.

Its subcellular location is the nucleus. The protein resides in the cytoplasm. It carries out the reaction S-ubiquitinyl-[E2 ubiquitin-conjugating enzyme]-L-cysteine + [acceptor protein]-L-lysine = [E2 ubiquitin-conjugating enzyme]-L-cysteine + N(6)-ubiquitinyl-[acceptor protein]-L-lysine.. It participates in protein modification; protein ubiquitination. Functionally, E3 ubiquitin-protein ligase that negatively regulates programmed cell death and disease resistance. Participates in flowering time control by mediating ubiquitination and subsequent proteasomal degradation of SPIN1. The sequence is that of E3 ubiquitin-protein ligase SPL11 (SPL11) from Oryza sativa subsp. japonica (Rice).